Reading from the N-terminus, the 578-residue chain is Galectin-3-binding protein (578 aa).

The N-terminal stretch at 1-18 is a signal peptide; it reads MAFLWLFSLWLLVPGTQG. The region spanning 24–124 is the SRCR domain; sequence MRLVNGASAN…HEKDAGVVCS (101 aa). Intrachain disulfides connect Cys-49-Cys-113, Cys-62-Cys-123, and Cys-93-Cys-103. Residues Asn-69 and Asn-102 are each glycosylated (N-linked (GlcNAc...) asparagine). The 69-residue stretch at 153 to 221 folds into the BTB domain; sequence CDLFIQVTGQ…FYSRRIEVTM (69 aa). Residues 260 to 360 enclose the BACK domain; sequence PLELYAYAQA…VLPQELFELQ (101 aa). N-linked (GlcNAc...) asparagine glycans are attached at residues Asn-362 and Asn-398.

Homodimers and homomultimers. The multimers form ring-like structures with a diameter of 30-40 nm. Binds LGALS1 and LGALS3. Binds ITGB1, COL4A1, COL5A1, COL6A1, FN1 and NID. The unglycosylated form interacts with PDE4DIP; this interaction, which is PDE4DIP isoform-specific, may connect a pericentrosomal complex to the gamma-tubulin ring complex (gamma-TuRC) to promote microtubule assembly and acetylation.

The protein localises to the secreted. It is found in the extracellular space. The protein resides in the extracellular matrix. In terms of biological role, promotes integrin-mediated cell adhesion. May stimulate host defense against viruses and tumor cells. The sequence is that of Galectin-3-binding protein (LGALS3BP) from Mesocricetus auratus (Golden hamster).